Reading from the N-terminus, the 73-residue chain is UPF0154 protein PEPE_0872 (73 aa).

A helical membrane pass occupies residues 5–25; sequence IWIMIVIIALLVGAVGGFFFA.

This sequence belongs to the UPF0154 family.

The protein resides in the cell membrane. The chain is UPF0154 protein PEPE_0872 from Pediococcus pentosaceus (strain ATCC 25745 / CCUG 21536 / LMG 10740 / 183-1w).